Consider the following 204-residue polypeptide: uncharacterized protein (204 aa).

An N-terminal signal peptide occupies residues 1-17 (MKRLVTGLLALSLFLAA). Residues 17–100 (ACGQDSDQQK…NNNQANNNQK (84 aa)) form a disordered region. The N-palmitoyl cysteine moiety is linked to residue Cys-18. Cys-18 is lipidated: S-diacylglycerol cysteine. Residues 23–70 (DQQKDGNKEKDDKAKTEQQDKKTNDSSKDKKDNKDDSKDVNKDNKDNS) show a composition bias toward basic and acidic residues. Positions 71 to 100 (ANDNQQQSNSNATNNDQNQTNNNQANNNQK) are enriched in low complexity.

It is found in the cell membrane. This is an uncharacterized protein from Staphylococcus aureus (strain MSSA476).